A 118-amino-acid polypeptide reads, in one-letter code: Ribonuclease P protein component (118 aa).

Belongs to the RnpA family. In terms of assembly, consists of a catalytic RNA component (M1 or rnpB) and a protein subunit.

It catalyses the reaction Endonucleolytic cleavage of RNA, removing 5'-extranucleotides from tRNA precursor.. Functionally, RNaseP catalyzes the removal of the 5'-leader sequence from pre-tRNA to produce the mature 5'-terminus. It can also cleave other RNA substrates such as 4.5S RNA. The protein component plays an auxiliary but essential role in vivo by binding to the 5'-leader sequence and broadening the substrate specificity of the ribozyme. The protein is Ribonuclease P protein component of Shewanella denitrificans (strain OS217 / ATCC BAA-1090 / DSM 15013).